Here is a 447-residue protein sequence, read N- to C-terminus: GTPase Der (447 aa).

EngA-type G domains follow at residues 4-165 (QIIA…PKEK) and 180-357 (VQIV…KNWN). Residues 10-17 (GRPNVGKS), 57-61 (DTPGL), 119-122 (NKCE), 186-193 (GRPNAGKS), 233-237 (DTAGL), and 298-301 (NKWD) contribute to the GTP site. In terms of domain architecture, KH-like spans 358–443 (KKITTSKLNE…PIRFAYVKTK (86 aa)).

It belongs to the TRAFAC class TrmE-Era-EngA-EngB-Septin-like GTPase superfamily. EngA (Der) GTPase family. As to quaternary structure, associates with the 50S ribosomal subunit.

Its function is as follows. GTPase that plays an essential role in the late steps of ribosome biogenesis. The polypeptide is GTPase Der (Rickettsia canadensis (strain McKiel)).